The sequence spans 165 residues: RNA pyrophosphohydrolase (165 aa).

Residues glycine 6–threonine 149 enclose the Nudix hydrolase domain. Residues glycine 38–glycine 59 carry the Nudix box motif.

It belongs to the Nudix hydrolase family. RppH subfamily. A divalent metal cation is required as a cofactor.

In terms of biological role, accelerates the degradation of transcripts by removing pyrophosphate from the 5'-end of triphosphorylated RNA, leading to a more labile monophosphorylated state that can stimulate subsequent ribonuclease cleavage. The chain is RNA pyrophosphohydrolase from Hydrogenovibrio crunogenus (strain DSM 25203 / XCL-2) (Thiomicrospira crunogena).